A 273-amino-acid polypeptide reads, in one-letter code: Homeobox protein ceh-43 (273 aa).

2 disordered regions span residues 47-79 (NGAT…EEAF) and 153-204 (RRSK…LVSS). The homeobox DNA-binding region spans 102 to 161 (MRKPRTIYNSSQLQMLQKKFQKTQYLALPDRAALAHELGLSQTQVKIWFQNRRSKQKKQK).

It belongs to the distal-less homeobox family. Predominantly expressed in the head hypdodermis, neuronal support cells and CAN neurons.

The protein resides in the nucleus. In terms of biological role, probable transcription factor. Binds to the sequence motif 5'-ATAAT-3' in regulatory elements. Required for development of the anterior hypodermis during embryonic morphogenesis for cell adhesion; also affects embryonic and larval viability. Modulates and maintains dopaminergic neuron differentiation. May activate dopamine pathway genes in concert with ETS domain-containing protein ast-1, and homeobox proteins ceh-40 and ceh-20. This Caenorhabditis elegans protein is Homeobox protein ceh-43 (ceh-43).